Here is a 159-residue protein sequence, read N- to C-terminus: Voltage-dependent N-type calcium channel subunit alpha-1B (159 aa).

The helical transmembrane segment at 1–5 threads the bilayer; the sequence is LVTEI. The IV repeat unit spans residues 1–159; the sequence is LVTEIADTDN…LMLNLFVAVI (159 aa). Over 6–13 the chain is Extracellular; that stretch reads ADTDNFIN. Asn-13 carries an N-linked (GlcNAc...) asparagine glycan. The helical transmembrane segment at 14-32 threads the bilayer; that stretch reads LSFLRLFRAARLIKLLRQG. Topologically, residues 33-51 are cytoplasmic; that stretch reads YTIRILLWTFVQSFKALPY. Residues 52-71 traverse the membrane as a helical segment; that stretch reads VCLLIAMLFFIYAIIGMQVF. The Extracellular segment spans residues 72–135; sequence GNIALNDETS…LTKNECGSDF (64 aa). Residues 136–155 form a helical membrane-spanning segment; sequence AYFYFVSFIFLCSFLMLNLF. Over 156-159 the chain is Cytoplasmic; it reads VAVI.

It belongs to the calcium channel alpha-1 subunit (TC 1.A.1.11) family. CACNA1B subfamily. As to quaternary structure, multisubunit complex consisting of alpha-1, alpha-2, beta and delta subunits in a 1:1:1:1 ratio. The channel activity is directed by the pore-forming and voltage-sensitive alpha-1 subunit. In many cases, this subunit is sufficient to generate voltage-sensitive calcium channel activity. The auxiliary subunits beta and alpha-2/delta linked by a disulfide bridge regulate the channel activity. Interacts with RIMBP2. Phosphorylated in vitro by CaM-kinase II, PKA, PKC and CGPK.

Its subcellular location is the membrane. It catalyses the reaction Ca(2+)(in) = Ca(2+)(out). In terms of biological role, voltage-sensitive calcium channels (VSCC) mediate the entry of calcium ions into excitable cells and are also involved in a variety of calcium-dependent processes, including muscle contraction, hormone or neurotransmitter release, gene expression, cell motility, cell division and cell death. This alpha-1B subunit gives rise to N-type calcium currents. N-type calcium channels belong to the 'high-voltage activated' (HVA) group. They are involved in pain signaling. Calcium channels containing alpha-1B subunit may play a role in directed migration of immature neurons. Mediates Ca(2+) release probability at hippocampal neuronal soma and synaptic terminals. This Gallus gallus (Chicken) protein is Voltage-dependent N-type calcium channel subunit alpha-1B (CACNA1B).